A 160-amino-acid chain; its full sequence is Large ribosomal subunit protein uL18 (160 aa).

It belongs to the universal ribosomal protein uL18 family. Part of the 50S ribosomal subunit. Contacts the 5S and 23S rRNAs.

Functionally, this is one of the proteins that bind and probably mediate the attachment of the 5S RNA into the large ribosomal subunit, where it forms part of the central protuberance. The chain is Large ribosomal subunit protein uL18 from Thermoplasma volcanium (strain ATCC 51530 / DSM 4299 / JCM 9571 / NBRC 15438 / GSS1).